Consider the following 343-residue polypeptide: Ribosome production factor 1 (343 aa).

Composition is skewed to basic and acidic residues over residues 1–10 and 82–91; these read MAEKKGPEAK and EREALGDKAP. Disordered regions lie at residues 1–51 and 77–97; these read MAEK…LSEI and KKRKKEREALGDKAPPKPVPK. A Brix domain is found at 136–319; sequence PKILITTSDR…LRSLQKGTFD (184 aa). Residues 297–314 are RNA-binding; sequence VGIQELGPRFTLKLRSLQ.

The protein localises to the nucleus. It is found in the nucleolus. In terms of biological role, may be required for ribosome biogenesis. This chain is Ribosome production factor 1 (rpf1), found in Xenopus laevis (African clawed frog).